Consider the following 45-residue polypeptide: CQMVERGLDAKAKAAMLDAHDXARQKVANGQEAGQPGAXNMKELH.

Positions Lys26 to His45 are disordered.

Belongs to the CRISP family. Venom allergen 5-like subfamily. In terms of processing, contains 3 disulfide bonds. Expressed by the venom gland.

Its subcellular location is the secreted. The polypeptide is Scolopendra 20417.15 Da toxin (Scolopendra viridicornis nigra (Brazilian giant centipede)).